We begin with the raw amino-acid sequence, 157 residues long: Heavy metal-associated isoprenylated plant protein 16 (157 aa).

The region spanning 2–71 is the HMA domain; that stretch reads KQKILIRIAM…KVAFAELVSV (70 aa). Positions 73–115 are disordered; the sequence is KVEPPKDGDKKPEEEKKPEEKKPEEKKPEEKKPEPCCQPWQKP. A compositionally biased stretch (basic and acidic residues) spans 75–106; the sequence is EPPKDGDKKPEEEKKPEEKKPEEKKPEEKKPE. Residue Cys154 is modified to Cysteine methyl ester. A lipid anchor (S-farnesyl cysteine) is attached at Cys154. The propeptide at 155–157 is removed in mature form; that stretch reads RIM.

Belongs to the HIPP family.

Its function is as follows. Probable heavy-metal-binding protein. In Arabidopsis thaliana (Mouse-ear cress), this protein is Heavy metal-associated isoprenylated plant protein 16.